The sequence spans 242 residues: Anamorsin homolog (242 aa).

Residues 1-140 are N-terminal SAM-like domain; sequence MMNFADTLVI…NVTAENPDFL (140 aa). The interval 140-159 is disordered; that stretch reads LSNEDDNDEHSSDGEAHENA. The tract at residues 141 to 162 is linker; it reads SNEDDNDEHSSDGEAHENAEDN. Over residues 148 to 159 the composition is skewed to basic and acidic residues; sequence EHSSDGEAHENA. Residues C205, C208, C216, and C219 each coordinate [4Fe-4S] cluster. 2 short sequence motifs (cx2C motif) span residues 205 to 208 and 216 to 219; these read CGNC and CASC. Residues 205–219 are fe-S binding site B; the sequence is CGNCYLGDAFRCASC.

This sequence belongs to the anamorsin family. As to quaternary structure, monomer. Requires [4Fe-4S] cluster as cofactor.

It localises to the cytoplasm. The protein localises to the mitochondrion intermembrane space. Component of the cytosolic iron-sulfur (Fe-S) protein assembly (CIA) machinery. Required for the maturation of extramitochondrial Fe-S proteins. Part of an electron transfer chain functioning in an early step of cytosolic Fe-S biogenesis, facilitating the de novo assembly of a [4Fe-4S] cluster on the cytosolic Fe-S scaffold complex. Electrons are transferred from NADPH via a FAD- and FMN-containing diflavin oxidoreductase. Together with the diflavin oxidoreductase, also required for the assembly of the diferric tyrosyl radical cofactor of ribonucleotide reductase (RNR), probably by providing electrons for reduction during radical cofactor maturation in the catalytic small subunit. This is Anamorsin homolog from Plasmodium vivax (strain Salvador I).